Consider the following 368-residue polypeptide: DNA replication and repair protein RecF (368 aa).

30-37 (GNNAQGKT) contacts ATP.

This sequence belongs to the RecF family.

It is found in the cytoplasm. The RecF protein is involved in DNA metabolism; it is required for DNA replication and normal SOS inducibility. RecF binds preferentially to single-stranded, linear DNA. It also seems to bind ATP. The sequence is that of DNA replication and repair protein RecF from Streptococcus pyogenes serotype M12 (strain MGAS2096).